We begin with the raw amino-acid sequence, 166 residues long: Protein adg1 (166 aa).

The N-terminal stretch at 1 to 22 (MFLRSIFQTLCAVSFLAGSVFA) is a signal peptide.

It localises to the endoplasmic reticulum. In Schizosaccharomyces pombe (strain 972 / ATCC 24843) (Fission yeast), this protein is Protein adg1 (adg1).